An 833-amino-acid chain; its full sequence is Leucine--tRNA ligase (833 aa).

Residues 41–52 carry the 'HIGH' region motif; sequence PYPSGAGLHVGH. Residues 610–614 carry the 'KMSKS' region motif; the sequence is KMSKS. An ATP-binding site is contributed by Lys613.

The protein belongs to the class-I aminoacyl-tRNA synthetase family.

It is found in the cytoplasm. The enzyme catalyses tRNA(Leu) + L-leucine + ATP = L-leucyl-tRNA(Leu) + AMP + diphosphate. This Streptococcus pyogenes serotype M18 (strain MGAS8232) protein is Leucine--tRNA ligase.